A 518-amino-acid polypeptide reads, in one-letter code: Arginyl-tRNA--protein transferase 1 (518 aa).

Basic and acidic residues predominate over residues 149-165 (ESLQSEGKNSKKEEPHE). Residues 149 to 207 (ESLQSEGKNSKKEEPHELLQSQDSVGEKLGSGEPSHSVKVHTVPKPGKGADLSKPPCRK) are disordered. Phosphoserine is present on S169.

The protein belongs to the R-transferase family. As to quaternary structure, monomer. Interacts with LIAT1; LIAT1 is not a substrate of ATE1, the interaction takes place in the cytoplasm and seems to increase ATE1 arginyltransferase activity.

The protein resides in the nucleus. Its subcellular location is the cytoplasm. It catalyses the reaction an N-terminal L-alpha-aminoacyl-[protein] + L-arginyl-tRNA(Arg) = an N-terminal L-arginyl-L-aminoacyl-[protein] + tRNA(Arg) + H(+). Involved in the post-translational conjugation of arginine to the N-terminal aspartate or glutamate of a protein. This arginylation is required for degradation of the protein via the ubiquitin pathway. Does not arginylate cysteine residues. This is Arginyl-tRNA--protein transferase 1 (ATE1) from Macaca fascicularis (Crab-eating macaque).